The sequence spans 347 residues: Protein RecA (347 aa).

68-75 (GPESSGKT) serves as a coordination point for ATP.

Belongs to the RecA family.

It is found in the cytoplasm. Functionally, can catalyze the hydrolysis of ATP in the presence of single-stranded DNA, the ATP-dependent uptake of single-stranded DNA by duplex DNA, and the ATP-dependent hybridization of homologous single-stranded DNAs. It interacts with LexA causing its activation and leading to its autocatalytic cleavage. This chain is Protein RecA, found in Rhodococcus jostii (strain RHA1).